We begin with the raw amino-acid sequence, 225 residues long: Ribose-5-phosphate isomerase A (225 aa).

Residues 32-35, 85-88, and 98-101 contribute to the substrate site; these read TGST, DGAD, and KGGG. The active-site Proton acceptor is Glu107. Lys125 provides a ligand contact to substrate.

The protein belongs to the ribose 5-phosphate isomerase family. Homodimer.

The enzyme catalyses aldehydo-D-ribose 5-phosphate = D-ribulose 5-phosphate. The protein operates within carbohydrate degradation; pentose phosphate pathway; D-ribose 5-phosphate from D-ribulose 5-phosphate (non-oxidative stage): step 1/1. Catalyzes the reversible conversion of ribose-5-phosphate to ribulose 5-phosphate. The polypeptide is Ribose-5-phosphate isomerase A (Hahella chejuensis (strain KCTC 2396)).